A 583-amino-acid polypeptide reads, in one-letter code: Lipoprotein LpqB (583 aa).

The N-terminal stretch at 1–29 (MSNKTTEATKTTKVKKVLSVVAGLGLLAG) is a signal peptide. Cysteine 30 is lipidated: N-palmitoyl cysteine. A lipid anchor (S-diacylglycerol cysteine) is attached at cysteine 30. Residues 38–63 (NPEAISSYAPAPSGQEAPTPTDGQPS) form a disordered region.

The protein belongs to the LpqB lipoprotein family.

The protein resides in the cell membrane. The sequence is that of Lipoprotein LpqB from Corynebacterium jeikeium (strain K411).